Here is a 194-residue protein sequence, read N- to C-terminus: dCTP deaminase (194 aa).

DCTP contacts are provided by residues 110 to 115 (RSSLAR), Asp-128, 136 to 138 (VLE), Tyr-171, Lys-178, and Gln-182. Glu-138 functions as the Proton donor/acceptor in the catalytic mechanism.

Belongs to the dCTP deaminase family. Homotrimer.

It catalyses the reaction dCTP + H2O + H(+) = dUTP + NH4(+). It functions in the pathway pyrimidine metabolism; dUMP biosynthesis; dUMP from dCTP (dUTP route): step 1/2. Functionally, catalyzes the deamination of dCTP to dUTP. In Glaesserella parasuis serovar 5 (strain SH0165) (Haemophilus parasuis), this protein is dCTP deaminase.